A 652-amino-acid chain; its full sequence is DNA ligase (652 aa).

NAD(+) contacts are provided by residues 29 to 33, 78 to 79, and Glu107; these read DSEYD and SL. Residue Lys109 is the N6-AMP-lysine intermediate of the active site. The NAD(+) site is built by Arg130, Glu164, Lys278, and Lys302. Residues Cys395, Cys398, Cys413, and Cys418 each contribute to the Zn(2+) site. Residues 577 to 652 form the BRCT domain; it reads VADAALSGLT…VRDEAWLESL (76 aa).

This sequence belongs to the NAD-dependent DNA ligase family. LigA subfamily. Requires Mg(2+) as cofactor. The cofactor is Mn(2+).

It carries out the reaction NAD(+) + (deoxyribonucleotide)n-3'-hydroxyl + 5'-phospho-(deoxyribonucleotide)m = (deoxyribonucleotide)n+m + AMP + beta-nicotinamide D-nucleotide.. Its function is as follows. DNA ligase that catalyzes the formation of phosphodiester linkages between 5'-phosphoryl and 3'-hydroxyl groups in double-stranded DNA using NAD as a coenzyme and as the energy source for the reaction. It is essential for DNA replication and repair of damaged DNA. This chain is DNA ligase, found in Streptococcus pneumoniae serotype 2 (strain D39 / NCTC 7466).